Consider the following 501-residue polypeptide: Armadillo repeat-containing protein 6 (501 aa).

Residue Ser-64 is modified to Phosphoserine. ARM repeat units lie at residues 220–264, 274–318, 319–369, and 370–412; these read GVLP…HAHN, KGLK…DLGG, LSIL…RAGG, and TESI…VEGG. The residue at position 263 (His-263) is a Pros-methylhistidine.

Belongs to the ARMC6 family. Methylated at His-263 by METTL9.

The protein is Armadillo repeat-containing protein 6 (ARMC6) of Homo sapiens (Human).